A 644-amino-acid chain; its full sequence is Probable potassium transport system protein Kup 2 (644 aa).

The interval Met-1–His-21 is disordered. Transmembrane regions (helical) follow at residues Leu-26–Leu-46, Val-69–Ile-89, Ile-120–Ala-140, Ala-155–Ile-175, Val-183–Thr-203, Leu-231–Ala-251, Trp-265–Leu-285, Leu-312–Phe-332, Ile-360–Phe-380, Tyr-390–Ile-410, Leu-419–Leu-439, and Asp-444–Gly-464.

Belongs to the HAK/KUP transporter (TC 2.A.72) family.

It localises to the cell inner membrane. It carries out the reaction K(+)(in) + H(+)(in) = K(+)(out) + H(+)(out). Its function is as follows. Transport of potassium into the cell. Likely operates as a K(+):H(+) symporter. The polypeptide is Probable potassium transport system protein Kup 2 (Rhizorhabdus wittichii (strain DSM 6014 / CCUG 31198 / JCM 15750 / NBRC 105917 / EY 4224 / RW1) (Sphingomonas wittichii)).